Here is an 879-residue protein sequence, read N- to C-terminus: DNA mismatch repair protein MutS (879 aa).

629–636 (GPNMAGKS) contacts ATP.

Belongs to the DNA mismatch repair MutS family.

This protein is involved in the repair of mismatches in DNA. It is possible that it carries out the mismatch recognition step. This protein has a weak ATPase activity. The sequence is that of DNA mismatch repair protein MutS from Ruegeria sp. (strain TM1040) (Silicibacter sp.).